Reading from the N-terminus, the 269-residue chain is Protein SET (269 aa).

Positions 1–33 (MSSVPKRAKLDGAPADGNTSAAAGNNEEESEAL) are disordered. Phosphoserine is present on residues S30, S148, and S152. The segment at 227-269 (LVPDIEVEPEDEEDNEDNDEEAFDDEDGEDGEGEEEEEDEDDK) is disordered. Acidic residues predominate over residues 231–269 (IEVEPEDEEDNEDNDEEAFDDEDGEDGEGEEEEEDEDDK).

This sequence belongs to the nucleosome assembly protein (NAP) family. As to quaternary structure, interacts specifically with B-type cyclins.

The polypeptide is Protein SET (Set) (Drosophila melanogaster (Fruit fly)).